A 527-amino-acid polypeptide reads, in one-letter code: GMP synthase [glutamine-hydrolyzing] (527 aa).

In terms of domain architecture, Glutamine amidotransferase type-1 spans 11-209 (RILILDFGSQ…VLNICGCENL (199 aa)). Residue C88 is the Nucleophile of the active site. Catalysis depends on residues H183 and E185. The GMPS ATP-PPase domain maps to 210-402 (WTSANIIEDA…LGLPYNMLYR (193 aa)). 237-243 (SGGVDSS) contacts ATP.

As to quaternary structure, homodimer.

It carries out the reaction XMP + L-glutamine + ATP + H2O = GMP + L-glutamate + AMP + diphosphate + 2 H(+). The protein operates within purine metabolism; GMP biosynthesis; GMP from XMP (L-Gln route): step 1/1. In terms of biological role, catalyzes the synthesis of GMP from XMP. The protein is GMP synthase [glutamine-hydrolyzing] of Photobacterium profundum (strain SS9).